The chain runs to 201 residues: Holliday junction branch migration complex subunit RuvA (201 aa).

The tract at residues 1–63 (MIAFVSGTVA…EDSLTLYGFA (63 aa)) is domain I. The segment at 64-139 (DDDERQVFEL…RLGEPIGAPA (76 aa)) is domain II. Residues 139 to 143 (AVGAP) form a flexible linker region. Positions 144-201 (VSTGWRDQLHAALIGLGYATREADEAVSAVAPQAEAAGGTPQVGALLKAALQTLNRAR) are domain III.

It belongs to the RuvA family. Homotetramer. Forms an RuvA(8)-RuvB(12)-Holliday junction (HJ) complex. HJ DNA is sandwiched between 2 RuvA tetramers; dsDNA enters through RuvA and exits via RuvB. An RuvB hexamer assembles on each DNA strand where it exits the tetramer. Each RuvB hexamer is contacted by two RuvA subunits (via domain III) on 2 adjacent RuvB subunits; this complex drives branch migration. In the full resolvosome a probable DNA-RuvA(4)-RuvB(12)-RuvC(2) complex forms which resolves the HJ.

The protein localises to the cytoplasm. In terms of biological role, the RuvA-RuvB-RuvC complex processes Holliday junction (HJ) DNA during genetic recombination and DNA repair, while the RuvA-RuvB complex plays an important role in the rescue of blocked DNA replication forks via replication fork reversal (RFR). RuvA specifically binds to HJ cruciform DNA, conferring on it an open structure. The RuvB hexamer acts as an ATP-dependent pump, pulling dsDNA into and through the RuvAB complex. HJ branch migration allows RuvC to scan DNA until it finds its consensus sequence, where it cleaves and resolves the cruciform DNA. The polypeptide is Holliday junction branch migration complex subunit RuvA (Streptomyces coelicolor (strain ATCC BAA-471 / A3(2) / M145)).